The primary structure comprises 424 residues: DNA primase DnaG (424 aa).

The Toprim domain maps to 166–241 (DTIIIVEGRA…KVDFIARAPE (76 aa)). Mg(2+) contacts are provided by Glu-172, Asp-215, and Asp-217.

Belongs to the archaeal DnaG primase family. As to quaternary structure, forms a ternary complex with MCM helicase and DNA. Component of the archaeal exosome complex. Mg(2+) serves as cofactor.

The enzyme catalyses ssDNA + n NTP = ssDNA/pppN(pN)n-1 hybrid + (n-1) diphosphate.. RNA polymerase that catalyzes the synthesis of short RNA molecules used as primers for DNA polymerase during DNA replication. Also part of the exosome, which is a complex involved in RNA degradation. Acts as a poly(A)-binding protein that enhances the interaction between heteromeric, adenine-rich transcripts and the exosome. The polypeptide is DNA primase DnaG (Staphylothermus marinus (strain ATCC 43588 / DSM 3639 / JCM 9404 / F1)).